Reading from the N-terminus, the 147-residue chain is Putative acetyltransferase BSU40680 (147 aa).

The 144-residue stretch at 1–144 folds into the N-acetyltransferase domain; it reads MNVKKITSEQ…PHVLMTKQDD (144 aa). CoA contacts are provided by residues 74–76 and 115–117; these read ICI and GFY.

Belongs to the UPF0039 (ElaA) family.

In terms of biological role, could catalyze the transfer of an acetyl group from acetyl coenzyme A (AcCoA) to an acceptor substrate and release both CoA and the acetylated product. This Bacillus subtilis (strain 168) protein is Putative acetyltransferase BSU40680 (yybD).